The chain runs to 215 residues: Pyridoxine/pyridoxamine 5'-phosphate oxidase (215 aa).

Substrate contacts are provided by residues 9 to 12 (RRDY) and Lys69. FMN is bound by residues 64–69 (RVLLLK), 79–80 (FS), Lys86, and Gln108. Substrate contacts are provided by Tyr126, Arg130, and Ser134. FMN-binding positions include 143–144 (QS) and Trp188. Position 194 to 196 (194 to 196 (RLH)) interacts with substrate. Arg198 contacts FMN.

It belongs to the pyridoxamine 5'-phosphate oxidase family. Homodimer. FMN serves as cofactor.

It carries out the reaction pyridoxamine 5'-phosphate + O2 + H2O = pyridoxal 5'-phosphate + H2O2 + NH4(+). The catalysed reaction is pyridoxine 5'-phosphate + O2 = pyridoxal 5'-phosphate + H2O2. The protein operates within cofactor metabolism; pyridoxal 5'-phosphate salvage; pyridoxal 5'-phosphate from pyridoxamine 5'-phosphate: step 1/1. It participates in cofactor metabolism; pyridoxal 5'-phosphate salvage; pyridoxal 5'-phosphate from pyridoxine 5'-phosphate: step 1/1. Its function is as follows. Catalyzes the oxidation of either pyridoxine 5'-phosphate (PNP) or pyridoxamine 5'-phosphate (PMP) into pyridoxal 5'-phosphate (PLP). This is Pyridoxine/pyridoxamine 5'-phosphate oxidase from Ectopseudomonas mendocina (strain ymp) (Pseudomonas mendocina).